The chain runs to 538 residues: Atos homolog protein B (538 aa).

The segment covering 1–18 has biased composition (low complexity); it reads MRHVQAEPSPSSEPEAGP. Disordered stretches follow at residues 1–114 and 133–300; these read MRHV…LGVA and TSSW…VLDP. A compositionally biased stretch (pro residues) spans 227-238; it reads HTPPGPGPPGPC. S254 and S255 each carry phosphoserine. Residues 348-430 are required for macropage invasion; the sequence is LLGNFEESLL…VPKVGTVQVT (83 aa). The segment at 436–444 is transactivation domain 1 (TAD1); it reads QTVVKMFLV.

The protein belongs to the ATOS family.

The protein resides in the nucleus. Transcription regulator that may syncronize transcriptional and translational programs. The sequence is that of Atos homolog protein B from Homo sapiens (Human).